Consider the following 366-residue polypeptide: DNA polymerase IV (366 aa).

The 192-residue stretch at 6–197 (IIHVDMDYFY…LKVSKLWGIG (192 aa)) folds into the UmuC domain. Mg(2+) is bound by residues D10 and D114. Residue E115 is part of the active site.

It belongs to the DNA polymerase type-Y family. Monomer. Mg(2+) serves as cofactor.

It localises to the cytoplasm. It catalyses the reaction DNA(n) + a 2'-deoxyribonucleoside 5'-triphosphate = DNA(n+1) + diphosphate. In terms of biological role, poorly processive, error-prone DNA polymerase involved in untargeted mutagenesis. Copies undamaged DNA at stalled replication forks, which arise in vivo from mismatched or misaligned primer ends. These misaligned primers can be extended by PolIV. Exhibits no 3'-5' exonuclease (proofreading) activity. May be involved in translesional synthesis. The sequence is that of DNA polymerase IV from Methanosarcina acetivorans (strain ATCC 35395 / DSM 2834 / JCM 12185 / C2A).